A 103-amino-acid polypeptide reads, in one-letter code: Pyrimidine/purine nucleoside phosphorylase (103 aa).

It belongs to the nucleoside phosphorylase PpnP family.

It carries out the reaction a purine D-ribonucleoside + phosphate = a purine nucleobase + alpha-D-ribose 1-phosphate. The catalysed reaction is adenosine + phosphate = alpha-D-ribose 1-phosphate + adenine. It catalyses the reaction cytidine + phosphate = cytosine + alpha-D-ribose 1-phosphate. The enzyme catalyses guanosine + phosphate = alpha-D-ribose 1-phosphate + guanine. It carries out the reaction inosine + phosphate = alpha-D-ribose 1-phosphate + hypoxanthine. The catalysed reaction is thymidine + phosphate = 2-deoxy-alpha-D-ribose 1-phosphate + thymine. It catalyses the reaction uridine + phosphate = alpha-D-ribose 1-phosphate + uracil. The enzyme catalyses xanthosine + phosphate = alpha-D-ribose 1-phosphate + xanthine. Its function is as follows. Catalyzes the phosphorolysis of diverse nucleosides, yielding D-ribose 1-phosphate and the respective free bases. Can use uridine, adenosine, guanosine, cytidine, thymidine, inosine and xanthosine as substrates. Also catalyzes the reverse reactions. The chain is Pyrimidine/purine nucleoside phosphorylase from Cupriavidus metallidurans (strain ATCC 43123 / DSM 2839 / NBRC 102507 / CH34) (Ralstonia metallidurans).